The chain runs to 140 residues: uncharacterized protein (140 aa).

The segment at 121 to 140 (EEVKNGELIDPNVTTEDEKL) is disordered.

This is an uncharacterized protein from Schizosaccharomyces pombe (strain 972 / ATCC 24843) (Fission yeast).